The sequence spans 714 residues: Polyribonucleotide nucleotidyltransferase (714 aa).

Asp-489 and Asp-495 together coordinate Mg(2+). Residues 556 to 615 form the KH domain; the sequence is PKIDTIKIDVDKIKVVIGKGGETIDKIIAETGVKIDIDEEGNVSIYSSDQDAINRAKEII. The 69-residue stretch at 625 to 693 folds into the S1 motif domain; sequence GEVYHAKVVR…DKGRIDASMK (69 aa). A disordered region spans residues 691–714; the sequence is SMKALVPRPPKPEKSEAKKEGKHD. Basic and acidic residues predominate over residues 700–714; it reads PKPEKSEAKKEGKHD.

This sequence belongs to the polyribonucleotide nucleotidyltransferase family. Mg(2+) serves as cofactor.

Its subcellular location is the cytoplasm. It carries out the reaction RNA(n+1) + phosphate = RNA(n) + a ribonucleoside 5'-diphosphate. Its function is as follows. Involved in mRNA degradation. Catalyzes the phosphorolysis of single-stranded polyribonucleotides processively in the 3'- to 5'-direction. The polypeptide is Polyribonucleotide nucleotidyltransferase (Streptococcus equi subsp. zooepidemicus (strain MGCS10565)).